The sequence spans 497 residues: Cytochrome P450 2D6 (497 aa).

D301 contributes to the substrate binding site. C443 is a binding site for heme.

It belongs to the cytochrome P450 family. Heme serves as cofactor.

It localises to the endoplasmic reticulum membrane. The protein resides in the microsome membrane. The catalysed reaction is (5Z,8Z,11Z,14Z)-eicosatetraenoate + reduced [NADPH--hemoprotein reductase] + O2 = (8R,9S)-epoxy-(5Z,11Z,14Z)-eicosatrienoate + oxidized [NADPH--hemoprotein reductase] + H2O + H(+). The enzyme catalyses (5Z,8Z,11Z,14Z)-eicosatetraenoate + reduced [NADPH--hemoprotein reductase] + O2 = (11R,12S)-epoxy-(5Z,8Z,14Z)-eicosatrienoate + oxidized [NADPH--hemoprotein reductase] + H2O + H(+). It catalyses the reaction (5Z,8Z,11Z,14Z)-eicosatetraenoate + reduced [NADPH--hemoprotein reductase] + O2 = (14S,15R)-epoxy-(5Z,8Z,11Z)-eicosatrienoate + oxidized [NADPH--hemoprotein reductase] + H2O + H(+). It carries out the reaction N-(5Z,8Z,11Z,14Z-eicosatetraenoyl)-ethanolamine + reduced [NADPH--hemoprotein reductase] + O2 = N-(8,9-epoxy-5Z,11Z,14Z-eicosatrienoyl)-ethanolamine + oxidized [NADPH--hemoprotein reductase] + H2O + H(+). The catalysed reaction is N-(5Z,8Z,11Z,14Z-eicosatetraenoyl)-ethanolamine + reduced [NADPH--hemoprotein reductase] + O2 = N-(11,12-epoxy-5Z,8Z,14Z-eicosatrienoyl)-ethanolamine + oxidized [NADPH--hemoprotein reductase] + H2O + H(+). The enzyme catalyses N-(5Z,8Z,11Z,14Z-eicosatetraenoyl)-ethanolamine + reduced [NADPH--hemoprotein reductase] + O2 = N-(14,15-epoxy-5Z,8Z,11Z-eicosatrienoyl)-ethanolamine + oxidized [NADPH--hemoprotein reductase] + H2O + H(+). It catalyses the reaction N-(5Z,8Z,11Z,14Z-eicosatetraenoyl)-ethanolamine + reduced [NADPH--hemoprotein reductase] + O2 = N-(20-hydroxy-5Z,8Z,11Z,14Z-eicosatetraenoyl)-ethanolamine + oxidized [NADPH--hemoprotein reductase] + H2O + H(+). It carries out the reaction (5Z,8Z,11Z,14Z,17Z)-eicosapentaenoate + reduced [NADPH--hemoprotein reductase] + O2 = (17S,18R)-epoxy-(5Z,8Z,11Z,14Z)-eicosatetraenoate + oxidized [NADPH--hemoprotein reductase] + H2O + H(+). The catalysed reaction is (4Z,7Z,10Z,13Z,16Z,19Z)-docosahexaenoate + reduced [NADPH--hemoprotein reductase] + O2 = (19R,20S)-epoxy-(4Z,7Z,10Z,13Z,16Z)-docosapentaenoate + oxidized [NADPH--hemoprotein reductase] + H2O + H(+). The enzyme catalyses (4Z,7Z,10Z,13Z,16Z,19Z)-docosahexaenoate + reduced [NADPH--hemoprotein reductase] + O2 = (19S,20R)-epoxy-(4Z,7Z,10Z,13Z,16Z)-docosapentaenoate + oxidized [NADPH--hemoprotein reductase] + H2O + H(+). It catalyses the reaction cholesterol + reduced [NADPH--hemoprotein reductase] + O2 = 25-hydroxycholesterol + oxidized [NADPH--hemoprotein reductase] + H2O + H(+). It carries out the reaction all-trans-retinol + reduced [NADPH--hemoprotein reductase] + O2 = all-trans-retinal + oxidized [NADPH--hemoprotein reductase] + 2 H2O + H(+). The protein operates within cofactor metabolism; retinol metabolism. Its pathway is lipid metabolism; fatty acid metabolism. It participates in steroid metabolism; cholesterol metabolism. A cytochrome P450 monooxygenase involved in the metabolism of fatty acids, steroids and retinoids. Mechanistically, uses molecular oxygen inserting one oxygen atom into a substrate, and reducing the second into a water molecule, with two electrons provided by NADPH via cytochrome P450 reductase (NADPH--hemoprotein reductase). Catalyzes the epoxidation of double bonds of polyunsaturated fatty acids (PUFA). Metabolizes endocannabinoid arachidonoylethanolamide (anandamide) to 20-hydroxyeicosatetraenoic acid ethanolamide (20-HETE-EA) and 8,9-, 11,12-, and 14,15-epoxyeicosatrienoic acid ethanolamides (EpETrE-EAs), potentially modulating endocannabinoid system signaling. Catalyzes the hydroxylation of carbon-hydrogen bonds. Metabolizes cholesterol toward 25-hydroxycholesterol, a physiological regulator of cellular cholesterol homeostasis. Catalyzes the oxidative transformations of all-trans retinol to all-trans retinal, a precursor for the active form all-trans-retinoic acid. Also involved in the oxidative metabolism of drugs such as antiarrhythmics, adrenoceptor antagonists, and tricyclic antidepressants. The chain is Cytochrome P450 2D6 from Homo sapiens (Human).